A 310-amino-acid chain; its full sequence is Vomeronasal type-1 receptor 97 (310 aa).

Over 1 to 19 the chain is Extracellular; that stretch reads MNKDNILHTDTNIKITLFS. The helical transmembrane segment at 20 to 40 threads the bilayer; the sequence is EVSIGISANSALFFSHLFMLF. Topologically, residues 41-49 are cytoplasmic; the sequence is EKNRSKPID. Residues 50 to 70 form a helical membrane-spanning segment; the sequence is LYIAFLSLTQLMLLITIGLIA. Topologically, residues 71-93 are extracellular; the sequence is ADMFMSRGRWDSTTCQSLIYLHR. Residues cysteine 85 and cysteine 172 are joined by a disulfide bond. The helical transmembrane segment at 94–114 threads the bilayer; it reads LLRGFTLCATCLLNVLWTITL. Topologically, residues 115–131 are cytoplasmic; sequence SPRSSCLTTFKHKSPHH. Residues 132-152 form a helical membrane-spanning segment; that stretch reads ISGAFLFFCVLYISFGSHLFL. The Extracellular portion of the chain corresponds to 153-190; it reads STIATPNLTSDNFMYVTQSCSFLPMSYSRTSMFSTPMA. N-linked (GlcNAc...) asparagine glycosylation is present at asparagine 159. Residues 191-211 traverse the membrane as a helical segment; the sequence is IREALLIGLIGLSSGYMVAFL. At 212 to 238 the chain is on the cytoplasmic side; it reads WRHKNQARHLHSTSLSSKVSPEQRATR. The helical transmembrane segment at 239–259 threads the bilayer; sequence TIMILMSFFVVLYILENVVFY. The Extracellular portion of the chain corresponds to 260-269; it reads SRMTFKDGSM. A helical transmembrane segment spans residues 270-290; sequence FYCVQIIVSHSYATISPFVFI. Residues 291 to 310 lie on the Cytoplasmic side of the membrane; that stretch reads CTEKRIIKLWGSMSSRIVSI.

It belongs to the G-protein coupled receptor 1 family. In terms of tissue distribution, expressed in 1-4% of neurons of the vomeronasal organ. Only one pheromone receptor gene may be expressed in a particular neuron. Not expressed in the main olfactory epithelium.

The protein resides in the cell membrane. In terms of biological role, putative pheromone receptor implicated in the regulation of social as well as reproductive behavior. The sequence is that of Vomeronasal type-1 receptor 97 (Vom1r97) from Rattus norvegicus (Rat).